A 27-amino-acid polypeptide reads, in one-letter code: Histone H1.3, embryonic (27 aa).

In terms of domain architecture, H15 spans 1-27; it reads HVVAAITALKERGGSSHQALKKYKAAN.

It belongs to the histone H1/H5 family.

Its subcellular location is the nucleus. It is found in the chromosome. Histones H1 are necessary for the condensation of nucleosome chains into higher-order structures. This chain is Histone H1.3, embryonic, found in Parechinus angulosus (Angulate sea urchin).